Consider the following 82-residue polypeptide: Photosystem I iron-sulfur center (82 aa).

2 4Fe-4S ferredoxin-type domains span residues 2 to 31 and 40 to 69; these read AHTV…MVPW and IAAA…IRVY. Cys-11, Cys-14, Cys-17, Cys-21, Cys-49, Cys-52, Cys-55, and Cys-59 together coordinate [4Fe-4S] cluster.

In terms of assembly, the cyanobacterial PSI reaction center is composed of one copy each of PsaA,B,C,D,E,F,I,J,K,L,M and X, and forms trimeric complexes. [4Fe-4S] cluster serves as cofactor.

It is found in the cellular thylakoid membrane. It carries out the reaction reduced [plastocyanin] + hnu + oxidized [2Fe-2S]-[ferredoxin] = oxidized [plastocyanin] + reduced [2Fe-2S]-[ferredoxin]. Apoprotein for the two 4Fe-4S centers FA and FB of photosystem I (PSI); essential for photochemical activity. FB is the terminal electron acceptor of PSI, donating electrons to ferredoxin. The C-terminus interacts with PsaA/B/D and helps assemble the protein into the PSI complex. Required for binding of PsaD and PsaE to PSI. PSI is a plastocyanin/cytochrome c6-ferredoxin oxidoreductase, converting photonic excitation into a charge separation, which transfers an electron from the donor P700 chlorophyll pair to the spectroscopically characterized acceptors A0, A1, FX, FA and FB in turn. This chain is Photosystem I iron-sulfur center, found in Synechococcus sp. (strain JA-3-3Ab) (Cyanobacteria bacterium Yellowstone A-Prime).